The sequence spans 216 residues: Octanoyltransferase (216 aa).

The region spanning 31-205 (STTRDEVWLV…ELVTLLDYEQ (175 aa)) is the BPL/LPL catalytic domain. Substrate contacts are provided by residues 70–77 (RGGQVTYH), 137–139 (SLG), and 150–152 (GLA). Residue Cys168 is the Acyl-thioester intermediate of the active site.

Belongs to the LipB family.

The protein localises to the cytoplasm. The enzyme catalyses octanoyl-[ACP] + L-lysyl-[protein] = N(6)-octanoyl-L-lysyl-[protein] + holo-[ACP] + H(+). It functions in the pathway protein modification; protein lipoylation via endogenous pathway; protein N(6)-(lipoyl)lysine from octanoyl-[acyl-carrier-protein]: step 1/2. Catalyzes the transfer of endogenously produced octanoic acid from octanoyl-acyl-carrier-protein onto the lipoyl domains of lipoate-dependent enzymes. Lipoyl-ACP can also act as a substrate although octanoyl-ACP is likely to be the physiological substrate. This chain is Octanoyltransferase, found in Vibrio cholerae serotype O1 (strain ATCC 39541 / Classical Ogawa 395 / O395).